A 687-amino-acid chain; its full sequence is FAD-dependent oxidoreductase domain-containing protein 2 (687 aa).

The N-terminal stretch at 1 to 22 (MSVIQLVFRLLCVLDLLLAVSA) is a signal peptide. N-linked (GlcNAc...) asparagine glycans are attached at residues asparagine 29 and asparagine 305.

Belongs to the FOXRED2 family. Requires FAD as cofactor. Post-translationally, N-glycosylated.

It localises to the endoplasmic reticulum lumen. In terms of biological role, probable flavoprotein which may function in endoplasmic reticulum associated degradation (ERAD). May bind non-native proteins in the endoplasmic reticulum and target them to the ubiquitination machinery for subsequent degradation. This chain is FAD-dependent oxidoreductase domain-containing protein 2 (foxred2), found in Danio rerio (Zebrafish).